We begin with the raw amino-acid sequence, 119 residues long: NADH dehydrogenase [ubiquinone] 1 subunit C2 (119 aa).

The chain crosses the membrane as a helical span at residues 56-75; it reads GLHRQLLYITAFFFAGYYLV.

The protein belongs to the complex I NDUFC2 subunit family. In terms of assembly, complex I is composed of 45 different subunits. Interacts with TMEM242.

The protein resides in the mitochondrion inner membrane. Functionally, accessory subunit of the mitochondrial membrane respiratory chain NADH dehydrogenase (Complex I), that is believed not to be involved in catalysis but required for the complex assembly. Complex I functions in the transfer of electrons from NADH to the respiratory chain. The immediate electron acceptor for the enzyme is believed to be ubiquinone. This is NADH dehydrogenase [ubiquinone] 1 subunit C2 from Gorilla gorilla gorilla (Western lowland gorilla).